The following is a 288-amino-acid chain: AA9 family lytic polysaccharide monooxygenase A (288 aa).

A signal peptide spans 1–22 (MKSTSATKFSVLAAATFAAAHG). Cu(2+)-binding residues include histidine 21 and histidine 104. 2 disulfide bridges follow: cysteine 74/cysteine 191 and cysteine 115/cysteine 119. Asparagine 151 carries N-linked (GlcNAc...) asparagine glycosylation. Residues histidine 177 and glutamine 186 each coordinate O2. Residue tyrosine 188 coordinates Cu(2+). The tract at residues 236–270 (PEPYKSGSGSSDNAAEAVSSAAAEEPAAAATSAAA) is disordered. The segment covering 249-270 (AAEAVSSAAAEEPAAAATSAAA) has biased composition (low complexity).

The protein belongs to the polysaccharide monooxygenase AA9 family. The cofactor is Cu(2+).

The protein localises to the secreted. The catalysed reaction is [(1-&gt;4)-beta-D-glucosyl]n+m + reduced acceptor + O2 = 4-dehydro-beta-D-glucosyl-[(1-&gt;4)-beta-D-glucosyl]n-1 + [(1-&gt;4)-beta-D-glucosyl]m + acceptor + H2O.. Its function is as follows. Lytic polysaccharide monooxygenase (LPMO) that depolymerizes crystalline and amorphous polysaccharides via the oxidation of scissile alpha- or beta-(1-4)-glycosidic bonds, yielding C1 and C4 oxidation products. Catalysis by LPMOs requires the reduction of the active-site copper from Cu(II) to Cu(I) by a reducing agent and H(2)O(2) or O(2) as a cosubstrate. Active on cellulose and on xyloglucan for deconstruction of plant biomass. This chain is AA9 family lytic polysaccharide monooxygenase A, found in Geotrichum candidum (Oospora lactis).